We begin with the raw amino-acid sequence, 259 residues long: Eukaryotic translation initiation factor 3 subunit G-2 (259 aa).

Residues 179 to 257 (SAVRISNLSE…LILSVEWSKP (79 aa)) form the RRM domain.

Belongs to the eIF-3 subunit G family. Component of the eukaryotic translation initiation factor 3 (eIF-3) complex. The eIF-3 complex interacts with pix.

The protein resides in the cytoplasm. In terms of biological role, RNA-binding component of the eukaryotic translation initiation factor 3 (eIF-3) complex, which is involved in protein synthesis of a specialized repertoire of mRNAs and, together with other initiation factors, stimulates binding of mRNA and methionyl-tRNAi to the 40S ribosome. The eIF-3 complex specifically targets and initiates translation of a subset of mRNAs involved in cell proliferation. This subunit can bind 18S rRNA. The polypeptide is Eukaryotic translation initiation factor 3 subunit G-2 (Drosophila mojavensis (Fruit fly)).